The following is a 762-amino-acid chain: Primary amine oxidase, liver isozyme (762 aa).

The first 16 residues, 1 to 16 (MFIFIFLSLWTLLVMG), serve as a signal peptide directing secretion. Residues 23–54 (GSEEGVGKQCHPSLPPRCPSRSPSDQPWTHPD) are disordered. N-linked (GlcNAc...) asparagine glycosylation occurs at Asn136. The cysteines at positions 197 and 198 are disulfide-linked. Asn231 is a glycosylation site (N-linked (GlcNAc...) asparagine). 383 to 393 (YMDSGFGMGYF) is a substrate binding site. Asp385 (proton acceptor) is an active-site residue. Cys403 and Cys429 are joined by a disulfide. 467–472 (MLNYDY) is a substrate binding site. Tyr470 serves as the catalytic Schiff-base intermediate with substrate; via topaquinone. Tyr470 is modified (2',4',5'-topaquinone). 2 residues coordinate Cu cation: His519 and His521. Residues Asp528, Leu529, Asp530, Glu571, Phe662, and Asn664 each coordinate Ca(2+). Residue Asn665 is glycosylated (N-linked (GlcNAc...) asparagine). 3 residues coordinate Ca(2+): Glu666, Asp672, and Leu673. Cu cation is bound at residue His683. The cysteines at positions 733 and 740 are disulfide-linked.

This sequence belongs to the copper/topaquinone oxidase family. As to quaternary structure, homodimer; disulfide-linked. Cu cation is required as a cofactor. Ca(2+) serves as cofactor. It depends on L-topaquinone as a cofactor. Topaquinone (TPQ) is generated by copper-dependent autoxidation of a specific tyrosyl residue. As to expression, liver.

Its subcellular location is the secreted. The protein resides in the extracellular space. It carries out the reaction a primary methyl amine + O2 + H2O = an aldehyde + H2O2 + NH4(+). The polypeptide is Primary amine oxidase, liver isozyme (Bos taurus (Bovine)).